Consider the following 202-residue polypeptide: Peptide methionine sulfoxide reductase A1 (202 aa).

A disordered region spans residues 1–20 (MNILNKLGIGSSRQTNMDPS). At Ser189 the chain carries Phosphoserine.

Belongs to the MsrA Met sulfoxide reductase family.

It is found in the cytoplasm. The protein localises to the cytosol. It catalyses the reaction L-methionyl-[protein] + [thioredoxin]-disulfide + H2O = L-methionyl-(S)-S-oxide-[protein] + [thioredoxin]-dithiol. It carries out the reaction [thioredoxin]-disulfide + L-methionine + H2O = L-methionine (S)-S-oxide + [thioredoxin]-dithiol. Functionally, catalyzes the reduction of methionine sulfoxide (MetSO) to methionine in proteins. Plays a protective role against oxidative stress by restoring activity to proteins that have been inactivated by methionine oxidation. MSRA family specifically reduces the MetSO S-enantiomer. In Arabidopsis thaliana (Mouse-ear cress), this protein is Peptide methionine sulfoxide reductase A1 (MSRA1).